The following is a 385-amino-acid chain: Probable tRNA sulfurtransferase (385 aa).

The THUMP domain occupies D57–K160. ATP contacts are provided by residues M180–L181, Y205–Y206, R262, G284, and Q293.

This sequence belongs to the ThiI family.

It localises to the cytoplasm. The catalysed reaction is [ThiI sulfur-carrier protein]-S-sulfanyl-L-cysteine + a uridine in tRNA + 2 reduced [2Fe-2S]-[ferredoxin] + ATP + H(+) = [ThiI sulfur-carrier protein]-L-cysteine + a 4-thiouridine in tRNA + 2 oxidized [2Fe-2S]-[ferredoxin] + AMP + diphosphate. It catalyses the reaction [ThiS sulfur-carrier protein]-C-terminal Gly-Gly-AMP + S-sulfanyl-L-cysteinyl-[cysteine desulfurase] + AH2 = [ThiS sulfur-carrier protein]-C-terminal-Gly-aminoethanethioate + L-cysteinyl-[cysteine desulfurase] + A + AMP + 2 H(+). It functions in the pathway cofactor biosynthesis; thiamine diphosphate biosynthesis. Its function is as follows. Catalyzes the ATP-dependent transfer of a sulfur to tRNA to produce 4-thiouridine in position 8 of tRNAs, which functions as a near-UV photosensor. Also catalyzes the transfer of sulfur to the sulfur carrier protein ThiS, forming ThiS-thiocarboxylate. This is a step in the synthesis of thiazole, in the thiamine biosynthesis pathway. The sulfur is donated as persulfide by IscS. This chain is Probable tRNA sulfurtransferase, found in Clostridium perfringens (strain ATCC 13124 / DSM 756 / JCM 1290 / NCIMB 6125 / NCTC 8237 / Type A).